Consider the following 496-residue polypeptide: NADP-dependent glyceraldehyde-3-phosphate dehydrogenase (496 aa).

The residue at position 2 (Ala-2) is an N-acetylalanine. A Phosphothreonine modification is found at Thr-4. Substrate-binding positions include Arg-116 and 169–170; that span reads NY. Residues Lys-192, Thr-195, and Asp-230 each contribute to the NADP(+) site. 245–249 lines the NAD(+) pocket; the sequence is GGDTG. Glu-264 serves as the catalytic Proton acceptor. 297–299 contacts substrate; that stretch reads RCT. The Nucleophile role is filled by Cys-298. Glu-391 is a binding site for NADP(+). Residue Arg-451 coordinates substrate.

Belongs to the aldehyde dehydrogenase family.

The protein localises to the cytoplasm. The catalysed reaction is D-glyceraldehyde 3-phosphate + NADP(+) + H2O = (2R)-3-phosphoglycerate + NADPH + 2 H(+). Functionally, important as a means of generating NADPH for biosynthetic reactions. This is NADP-dependent glyceraldehyde-3-phosphate dehydrogenase (ALDH11A3) from Arabidopsis thaliana (Mouse-ear cress).